Consider the following 199-residue polypeptide: Glycerol-3-phosphate acyltransferase (199 aa).

5 helical membrane passes run A3–V23, W50–V70, D78–L98, L113–L133, and L154–F174.

Belongs to the PlsY family. In terms of assembly, probably interacts with PlsX.

Its subcellular location is the cell inner membrane. It catalyses the reaction an acyl phosphate + sn-glycerol 3-phosphate = a 1-acyl-sn-glycero-3-phosphate + phosphate. Its pathway is lipid metabolism; phospholipid metabolism. Functionally, catalyzes the transfer of an acyl group from acyl-phosphate (acyl-PO(4)) to glycerol-3-phosphate (G3P) to form lysophosphatidic acid (LPA). This enzyme utilizes acyl-phosphate as fatty acyl donor, but not acyl-CoA or acyl-ACP. The protein is Glycerol-3-phosphate acyltransferase of Thermus thermophilus (strain ATCC BAA-163 / DSM 7039 / HB27).